Consider the following 117-residue polypeptide: Huntingtin-interacting protein M (117 aa).

2 stretches are compositionally biased toward basic and acidic residues: residues 1–11 (MSEKKSQEKPC) and 83–97 (QDRE…EPSR). Disordered regions lie at residues 1 to 25 (MSEK…SRPE) and 74 to 117 (NINN…RRNG).

May interact with the N-terminus of HD.

The sequence is that of Huntingtin-interacting protein M from Mus musculus (Mouse).